The chain runs to 665 residues: Translation factor guf1, mitochondrial (665 aa).

The N-terminal 40 residues, 1 to 40, are a transit peptide targeting the mitochondrion; it reads MRGCLQLARWLSAAPTRPAASHWPGLCAAPRFFSHSAILR. Residues 67–247 form the tr-type G domain; sequence ERYRNFCIVA…TVVDKIPAPI (181 aa). Residues 76–83, 140–144, and 194–197 contribute to the GTP site; these read AHVDHGKS, DTPGH, and NKVD.

It belongs to the TRAFAC class translation factor GTPase superfamily. Classic translation factor GTPase family. LepA subfamily.

It localises to the mitochondrion inner membrane. The catalysed reaction is GTP + H2O = GDP + phosphate + H(+). Functionally, promotes mitochondrial protein synthesis. May act as a fidelity factor of the translation reaction, by catalyzing a one-codon backward translocation of tRNAs on improperly translocated ribosomes. Binds to mitochondrial ribosomes in a GTP-dependent manner. This Aspergillus terreus (strain NIH 2624 / FGSC A1156) protein is Translation factor guf1, mitochondrial (guf1).